The chain runs to 206 residues: uncharacterized protein (206 aa).

2 disordered regions span residues 64 to 123 and 155 to 206; these read NTES…DPSL and VTTP…SSGG. The segment covering 66–79 has biased composition (polar residues); that stretch reads ESTQKTATTQQQGL. The span at 97-107 shows a compositional bias: low complexity; sequence AENNAQANQSE. Basic and acidic residues predominate over residues 108-118; sequence NRAESTTKAES. Over residues 155–167 the composition is skewed to low complexity; sequence VTTPTGQVVQPQT. Polar residues predominate over residues 182-198; the sequence is GSMNSKPVSRGGFSSPN.

This is an uncharacterized protein from Haemophilus influenzae (strain ATCC 51907 / DSM 11121 / KW20 / Rd).